Consider the following 57-residue polypeptide: Serine protease inhibitor Kazal-type 1 (57 aa).

Residues 4 to 57 enclose the Kazal-like domain; sequence LQRQANCNLKVNGCNKIYNPICGSDGITYANECLLCLENKKRQTSILVEKSGPC. Intrachain disulfides connect C10/C39, C17/C36, and C25/C57.

It is found in the secreted. Functionally, serine protease inhibitor which exhibits anti-trypsin activity. In the pancreas, protects against trypsin-catalyzed premature activation of zymogens. Its function is as follows. In the male reproductive tract, binds to sperm heads where it modulates sperm capacitance by inhibiting calcium uptake and nitrogen oxide (NO) production. The chain is Serine protease inhibitor Kazal-type 1 (SPINK1) from Canis lupus familiaris (Dog).